The chain runs to 160 residues: Seed allergenic protein RA5 (160 aa).

Residues 1-26 (MASNKVVFSVLLLAVVSVLAATATMA) form the signal peptide. 5 cysteine pairs are disulfide-bonded: cysteine 42–cysteine 92, cysteine 56–cysteine 80, cysteine 64–cysteine 124, cysteine 81–cysteine 140, and cysteine 94–cysteine 152.

This sequence belongs to the protease inhibitor I6 (cereal trypsin/alpha-amylase inhibitor) family. Five disulfide bonds are present.

The protein localises to the secreted. In terms of biological role, seed storage protein. This is Seed allergenic protein RA5 (RA5) from Oryza sativa subsp. japonica (Rice).